The following is a 341-amino-acid chain: UPF0284 protein Ta0078 (341 aa).

This sequence belongs to the UPF0284 family.

The sequence is that of UPF0284 protein Ta0078 from Thermoplasma acidophilum (strain ATCC 25905 / DSM 1728 / JCM 9062 / NBRC 15155 / AMRC-C165).